A 364-amino-acid chain; its full sequence is Delta(7)-sterol 5(6)-desaturase (364 aa).

A run of 3 helical transmembrane segments spans residues 94–114 (FFSL…ITAS), 142–162 (LAVS…MLEL), and 181–201 (KLLI…YLAH). The Fatty acid hydroxylase domain maps to 188–312 (TFIFFTDCGI…FTTLWDRLGG (125 aa)). The Histidine box-1 signature appears at 201-205 (HRWLH). The Histidine box-2 motif lies at 214–218 (HKPHH). The chain crosses the membrane as a helical span at residues 249 to 269 (ILPLHKISYLILFTFVNFWSV). The Histidine box-3 motif lies at 289–293 (HTVHH).

It belongs to the sterol desaturase family. Requires Fe cation as cofactor.

It localises to the endoplasmic reticulum membrane. It carries out the reaction a Delta(7)-sterol + 2 Fe(II)-[cytochrome b5] + O2 + 2 H(+) = a Delta(5),Delta(7)-sterol + 2 Fe(III)-[cytochrome b5] + 2 H2O. It functions in the pathway steroid metabolism; ergosterol biosynthesis; ergosterol from zymosterol: step 3/5. In terms of biological role, catalyzes the introduction of a C-5 double bond in the B ring of ergosterol. May contribute to the regulation of ergosterol biosynthesis. This Candida glabrata (strain ATCC 2001 / BCRC 20586 / JCM 3761 / NBRC 0622 / NRRL Y-65 / CBS 138) (Yeast) protein is Delta(7)-sterol 5(6)-desaturase (ERG3).